A 251-amino-acid chain; its full sequence is Aspartate/glutamate leucyltransferase (251 aa).

The protein belongs to the R-transferase family. Bpt subfamily.

It is found in the cytoplasm. It carries out the reaction N-terminal L-glutamyl-[protein] + L-leucyl-tRNA(Leu) = N-terminal L-leucyl-L-glutamyl-[protein] + tRNA(Leu) + H(+). The catalysed reaction is N-terminal L-aspartyl-[protein] + L-leucyl-tRNA(Leu) = N-terminal L-leucyl-L-aspartyl-[protein] + tRNA(Leu) + H(+). Functionally, functions in the N-end rule pathway of protein degradation where it conjugates Leu from its aminoacyl-tRNA to the N-termini of proteins containing an N-terminal aspartate or glutamate. This is Aspartate/glutamate leucyltransferase from Xanthomonas oryzae pv. oryzae (strain MAFF 311018).